The primary structure comprises 315 residues: Heme oxygenase 2 (315 aa).

The segment covering 1 to 12 has biased composition (acidic residues); it reads MSSEVETSEGVD. Residues 1–28 are disordered; that stretch reads MSSEVETSEGVDESEKNSMAPEKENHTK. Serine 2 carries the N-acetylserine modification. Residue serine 2 is modified to Phosphoserine. Residues 2–294 are Cytoplasmic-facing; the sequence is SSEVETSEGV…TTVAVLRKPS (293 aa). A compositionally biased stretch (basic and acidic residues) spans 13 to 28; the sequence is ESEKNSMAPEKENHTK. The heme b site is built by histidine 44, tyrosine 153, lysine 198, and arginine 202. 2 HRM repeats span residues 263 to 268 and 280 to 285; these read KCPFYA and NCPFQT. S-nitrosocysteine occurs at positions 264 and 281. Residues 295 to 315 form a helical; Anchor for type IV membrane protein membrane-spanning segment; that stretch reads LQLILAASVALVAGLLAWYYM.

This sequence belongs to the heme oxygenase family. In terms of processing, a soluble form arises by proteolytic removal of the membrane anchor. S-nitrosylated by BLVRB. Ubiquitous.

It localises to the microsome membrane. It is found in the endoplasmic reticulum membrane. It catalyses the reaction heme b + 3 reduced [NADPH--hemoprotein reductase] + 3 O2 = biliverdin IXalpha + CO + Fe(2+) + 3 oxidized [NADPH--hemoprotein reductase] + 3 H2O + H(+). Functionally, catalyzes the oxidative cleavage of heme at the alpha-methene bridge carbon, released as carbon monoxide (CO), to generate biliverdin IXalpha, while releasing the central heme iron chelate as ferrous iron. The protein is Heme oxygenase 2 (Hmox2) of Mus musculus (Mouse).